A 161-amino-acid chain; its full sequence is 2-C-methyl-D-erythritol 2,4-cyclodiphosphate synthase (161 aa).

Positions 10 and 12 each coordinate a divalent metal cation. 4-CDP-2-C-methyl-D-erythritol 2-phosphate contacts are provided by residues 10–12 and 36–37; these read DVH and HS. His-44 provides a ligand contact to a divalent metal cation. Residues 58–60, 63–67, and Arg-144 each bind 4-CDP-2-C-methyl-D-erythritol 2-phosphate; these read DIG and FSDTD.

Belongs to the IspF family. As to quaternary structure, homotrimer. A divalent metal cation serves as cofactor.

It catalyses the reaction 4-CDP-2-C-methyl-D-erythritol 2-phosphate = 2-C-methyl-D-erythritol 2,4-cyclic diphosphate + CMP. It participates in isoprenoid biosynthesis; isopentenyl diphosphate biosynthesis via DXP pathway; isopentenyl diphosphate from 1-deoxy-D-xylulose 5-phosphate: step 4/6. Its function is as follows. Involved in the biosynthesis of isopentenyl diphosphate (IPP) and dimethylallyl diphosphate (DMAPP), two major building blocks of isoprenoid compounds. Catalyzes the conversion of 4-diphosphocytidyl-2-C-methyl-D-erythritol 2-phosphate (CDP-ME2P) to 2-C-methyl-D-erythritol 2,4-cyclodiphosphate (ME-CPP) with a corresponding release of cytidine 5-monophosphate (CMP). In Burkholderia ambifaria (strain ATCC BAA-244 / DSM 16087 / CCUG 44356 / LMG 19182 / AMMD) (Burkholderia cepacia (strain AMMD)), this protein is 2-C-methyl-D-erythritol 2,4-cyclodiphosphate synthase.